The sequence spans 390 residues: Elongation factor Tu 1 (390 aa).

The tr-type G domain occupies 10–201 (KPHVNVGTIG…LDEYVAVPPR (192 aa)). The interval 19–26 (GHVDHGKT) is G1. 19 to 26 (GHVDHGKT) provides a ligand contact to GTP. T26 provides a ligand contact to Mg(2+). A G2 region spans residues 55-59 (GITIA). The segment at 76–79 (DCPG) is G3. GTP-binding positions include 76-80 (DCPGH) and 131-134 (NKAD). The G4 stretch occupies residues 131–134 (NKAD). The G5 stretch occupies residues 168–170 (SAL).

The protein belongs to the TRAFAC class translation factor GTPase superfamily. Classic translation factor GTPase family. EF-Tu/EF-1A subfamily. Monomer.

Its subcellular location is the cytoplasm. It carries out the reaction GTP + H2O = GDP + phosphate + H(+). Functionally, GTP hydrolase that promotes the GTP-dependent binding of aminoacyl-tRNA to the A-site of ribosomes during protein biosynthesis. This chain is Elongation factor Tu 1, found in Wolbachia pipientis wMel.